We begin with the raw amino-acid sequence, 266 residues long: Receptor-like protein 5 (266 aa).

A signal peptide spans 1-19 (MINYRHIVFCLCVMVVVDS). Residues 20–169 (RLTPYLAAIE…PTRNKNKPTV (150 aa)) lie on the Extracellular side of the membrane. LRR repeat units lie at residues 93 to 117 (LTSL…ITKL) and 119 to 143 (NLTI…IVIL). The N-linked (GlcNAc...) asparagine glycan is linked to Asn-119. A helical transmembrane segment spans residues 170-190 (LVLLLGILVGLVVAGGASFGF). The Cytoplasmic segment spans residues 191–266 (YLYRIRKQPK…TNQNPHLPYM (76 aa)).

This sequence belongs to the RLP family.

The protein localises to the cell membrane. This chain is Receptor-like protein 5, found in Arabidopsis thaliana (Mouse-ear cress).